Reading from the N-terminus, the 156-residue chain is MPRRREVPKRDVLPDPKFGSVELTKFMNVLMIDGKKSVAERIVYGALEQIEKKTGKVAIEVFNEAIANAKPIVEVKSRRVGGANYQVPVEVRPSRRLALAMRWVRDAARKRGEKSMDLRLAGELIDASEGRGGALKKREEVHRMAEANKAFSHFRF.

Belongs to the universal ribosomal protein uS7 family. Part of the 30S ribosomal subunit. Contacts proteins S9 and S11.

One of the primary rRNA binding proteins, it binds directly to 16S rRNA where it nucleates assembly of the head domain of the 30S subunit. Is located at the subunit interface close to the decoding center, probably blocks exit of the E-site tRNA. The chain is Small ribosomal subunit protein uS7 from Neisseria meningitidis serogroup C (strain 053442).